Reading from the N-terminus, the 163-residue chain is Nucleotide-binding protein HSM_1099 (163 aa).

This sequence belongs to the YajQ family.

Its function is as follows. Nucleotide-binding protein. The sequence is that of Nucleotide-binding protein HSM_1099 from Histophilus somni (strain 2336) (Haemophilus somnus).